Consider the following 353-residue polypeptide: Holliday junction branch migration complex subunit RuvB (353 aa).

The interval 4–185 is large ATPase domain (RuvB-L); the sequence is ADRLITAAGG…FGIVQRLEFY (182 aa). ATP-binding positions include I24, R25, G66, K69, T70, T71, 132–134, R175, Y185, and R222; that span reads EDF. Mg(2+) is bound at residue T70. The segment at 186–256 is small ATPAse domain (RuvB-S); that stretch reads NIADLSTIVS…TADKALNLLD (71 aa). The head domain (RuvB-H) stretch occupies residues 259-353; sequence EHGFDHQDRR…DDVVDDPADL (95 aa). R295, R314, and R319 together coordinate DNA.

Belongs to the RuvB family. Homohexamer. Forms an RuvA(8)-RuvB(12)-Holliday junction (HJ) complex. HJ DNA is sandwiched between 2 RuvA tetramers; dsDNA enters through RuvA and exits via RuvB. An RuvB hexamer assembles on each DNA strand where it exits the tetramer. Each RuvB hexamer is contacted by two RuvA subunits (via domain III) on 2 adjacent RuvB subunits; this complex drives branch migration. In the full resolvosome a probable DNA-RuvA(4)-RuvB(12)-RuvC(2) complex forms which resolves the HJ.

Its subcellular location is the cytoplasm. The catalysed reaction is ATP + H2O = ADP + phosphate + H(+). The RuvA-RuvB-RuvC complex processes Holliday junction (HJ) DNA during genetic recombination and DNA repair, while the RuvA-RuvB complex plays an important role in the rescue of blocked DNA replication forks via replication fork reversal (RFR). RuvA specifically binds to HJ cruciform DNA, conferring on it an open structure. The RuvB hexamer acts as an ATP-dependent pump, pulling dsDNA into and through the RuvAB complex. RuvB forms 2 homohexamers on either side of HJ DNA bound by 1 or 2 RuvA tetramers; 4 subunits per hexamer contact DNA at a time. Coordinated motions by a converter formed by DNA-disengaged RuvB subunits stimulates ATP hydrolysis and nucleotide exchange. Immobilization of the converter enables RuvB to convert the ATP-contained energy into a lever motion, pulling 2 nucleotides of DNA out of the RuvA tetramer per ATP hydrolyzed, thus driving DNA branch migration. The RuvB motors rotate together with the DNA substrate, which together with the progressing nucleotide cycle form the mechanistic basis for DNA recombination by continuous HJ branch migration. Branch migration allows RuvC to scan DNA until it finds its consensus sequence, where it cleaves and resolves cruciform DNA. The chain is Holliday junction branch migration complex subunit RuvB from Pseudomonas savastanoi pv. phaseolicola (strain 1448A / Race 6) (Pseudomonas syringae pv. phaseolicola (strain 1448A / Race 6)).